A 269-amino-acid polypeptide reads, in one-letter code: Histidinol-phosphatase (269 aa).

Belongs to the PHP hydrolase family. HisK subfamily.

The catalysed reaction is L-histidinol phosphate + H2O = L-histidinol + phosphate. It functions in the pathway amino-acid biosynthesis; L-histidine biosynthesis; L-histidine from 5-phospho-alpha-D-ribose 1-diphosphate: step 8/9. This is Histidinol-phosphatase (hisK) from Lactococcus lactis subsp. lactis (strain IL1403) (Streptococcus lactis).